The chain runs to 363 residues: DNA replication and repair protein RecF (363 aa).

Position 30–37 (30–37) interacts with ATP; the sequence is GSNGSGKT.

Belongs to the RecF family.

It localises to the cytoplasm. In terms of biological role, the RecF protein is involved in DNA metabolism; it is required for DNA replication and normal SOS inducibility. RecF binds preferentially to single-stranded, linear DNA. It also seems to bind ATP. This Photorhabdus laumondii subsp. laumondii (strain DSM 15139 / CIP 105565 / TT01) (Photorhabdus luminescens subsp. laumondii) protein is DNA replication and repair protein RecF.